The primary structure comprises 480 residues: Ammonium transporter 3 member 3 (480 aa).

Transmembrane regions (helical) follow at residues 31-51 (SATL…GSIV), 59-79 (SAFM…VWAY), 135-155 (MVYF…GSLL), 169-189 (LWIT…GFLF), 198-218 (GGYV…YWVG), 233-253 (ILLV…FNGG), 265-287 (AVLN…DVFF), 292-314 (SVIG…AGLV), 318-337 (AAIV…MMVL), 361-381 (GFLG…SLFL), and 407-427 (LFVT…ISLI).

It belongs to the ammonia transporter channel (TC 1.A.11.2) family.

It is found in the membrane. Its function is as follows. Involved in ammonium transport. This chain is Ammonium transporter 3 member 3 (AMT3-3), found in Oryza sativa subsp. japonica (Rice).